The following is a 198-amino-acid chain: Dual specificity protein phosphatase 14 (198 aa).

The Tyrosine-protein phosphatase domain occupies 26 to 167 (GIAQITSSLF…LIDYERQLFG (142 aa)). Residue cysteine 111 is the Phosphocysteine intermediate of the active site.

It belongs to the protein-tyrosine phosphatase family. Non-receptor class dual specificity subfamily. As to quaternary structure, interacts with CD28.

It carries out the reaction O-phospho-L-tyrosyl-[protein] + H2O = L-tyrosyl-[protein] + phosphate. The enzyme catalyses O-phospho-L-seryl-[protein] + H2O = L-seryl-[protein] + phosphate. It catalyses the reaction O-phospho-L-threonyl-[protein] + H2O = L-threonyl-[protein] + phosphate. Involved in the inactivation of MAP kinases. Dephosphorylates ERK, JNK and p38 MAP-kinases. Plays a negative role in TCR signaling by dephosphorylating MAP3K7 adapter TAB1 leading to its inactivation. This Homo sapiens (Human) protein is Dual specificity protein phosphatase 14 (DUSP14).